The chain runs to 208 residues: Imidazoleglycerol-phosphate dehydratase (208 aa).

Belongs to the imidazoleglycerol-phosphate dehydratase family.

Its subcellular location is the cytoplasm. It carries out the reaction D-erythro-1-(imidazol-4-yl)glycerol 3-phosphate = 3-(imidazol-4-yl)-2-oxopropyl phosphate + H2O. Its pathway is amino-acid biosynthesis; L-histidine biosynthesis; L-histidine from 5-phospho-alpha-D-ribose 1-diphosphate: step 6/9. The polypeptide is Imidazoleglycerol-phosphate dehydratase (Mycobacterium sp. (strain JLS)).